Reading from the N-terminus, the 105-residue chain is Flagellar transcriptional regulator FlhD (105 aa).

This sequence belongs to the FlhD family. As to quaternary structure, homodimer; disulfide-linked. Forms a heterohexamer composed of two FlhC and four FlhD subunits. Each FlhC binds a FlhD dimer, forming a heterotrimer, and a hexamer assembles by dimerization of two heterotrimers.

The protein localises to the cytoplasm. Its function is as follows. Functions in complex with FlhC as a master transcriptional regulator that regulates transcription of several flagellar and non-flagellar operons by binding to their promoter region. Activates expression of class 2 flagellar genes, including fliA, which is a flagellum-specific sigma factor that turns on the class 3 genes. Also regulates genes whose products function in a variety of physiological pathways. In Nitrosomonas eutropha (strain DSM 101675 / C91 / Nm57), this protein is Flagellar transcriptional regulator FlhD.